The following is a 507-amino-acid chain: Cyclin-dependent kinase-like 2 (507 aa).

In terms of domain architecture, Protein kinase spans 4-289 (YENLGLVGEG…CADLLHHDFF (286 aa)). ATP is bound by residues 10–18 (VGEGSYGMV) and Lys33. The [NKR]KIAxRE motif lies at 45 to 51 (KKIAMRE). Asp126 acts as the Proton acceptor in catalysis. A disordered region spans residues 365 to 392 (KTEKGTRASNGSCLHDNGTSHKGLSSTS).

The protein belongs to the protein kinase superfamily. CMGC Ser/Thr protein kinase family. CDC2/CDKX subfamily.

Its subcellular location is the cytoplasm. It localises to the nucleus. It carries out the reaction L-seryl-[protein] + ATP = O-phospho-L-seryl-[protein] + ADP + H(+). The enzyme catalyses L-threonyl-[protein] + ATP = O-phospho-L-threonyl-[protein] + ADP + H(+). In Rattus norvegicus (Rat), this protein is Cyclin-dependent kinase-like 2.